The chain runs to 522 residues: Sorting nexin-1 (522 aa).

Positions 1–142 (MASGGGGCSA…ELEEEEQEDQ (142 aa)) are disordered. Residues serine 32 and serine 39 each carry the phosphoserine modification. A compositionally biased stretch (acidic residues) spans 35 to 45 (EAGDSDTEGED). Phosphothreonine occurs at positions 41 and 48. Serine 58 and serine 72 each carry phosphoserine. The segment covering 132 to 142 (EELEEEEQEDQ) has biased composition (acidic residues). A PX domain is found at 143-272 (FDLTVGITDP…EFLEKEELPR (130 aa)). 3 residues coordinate a 1,2-diacyl-sn-glycero-3-phospho-(1D-myo-inositol-3-phosphate): arginine 186, serine 188, and lysine 214. Position 188 is a phosphoserine (serine 188). N6-acetyllysine is present on lysine 237. A 1,2-diacyl-sn-glycero-3-phospho-(1D-myo-inositol-3-phosphate) is bound at residue arginine 238. Residue serine 280 is modified to Phosphoserine. Residues 281-298 (GAGLLKMFNKATDAVSKM) are membrane-binding amphipathic helix. The BAR domain occupies 302–522 (MNESDIWFEE…AFLPEAKAIS (221 aa)).

The protein belongs to the sorting nexin family. In terms of assembly, predominantly forms heterodimers with BAR domain-containing sorting nexins SNX5, SNX6 and SNX32; can self-associate to form homodimers. The heterodimers are proposed to self-assemble into helical arrays on the membrane to stabilize and expand local membrane curvature underlying endosomal tubule formation. Thought to be a component of the originally described retromer complex (also called SNX-BAR retromer) which is a pentamer containing the heterotrimeric retromer cargo-selective complex (CSC), also described as vacuolar protein sorting subcomplex (VPS) and a heterodimeric membrane-deforming subcomplex formed between SNX1 or SNX2 and SNX5 or SNX6 (also called SNX-BAR subcomplex); the respective CSC and SNX-BAR subcomplexes associate with low affinity. Interacts with SNX5, SNX6, SNX32, VPS26A, VPS29, VPS35, DRD5, DENND5A, KALRN, RHOG (GDP-bound form). The interaction with SNX2 is reported controversially. Interacts with DNAJC13; prevented by presence of HGS. Interacts with HGS.

The protein resides in the endosome membrane. Its subcellular location is the golgi apparatus. The protein localises to the trans-Golgi network membrane. It is found in the early endosome membrane. It localises to the cell projection. The protein resides in the lamellipodium. Functionally, involved in several stages of intracellular trafficking. Interacts with membranes containing phosphatidylinositol 3-phosphate (PtdIns(3P)) or phosphatidylinositol 3,5-bisphosphate (PtdIns(3,5)P2). Acts in part as component of the retromer membrane-deforming SNX-BAR subcomplex. The SNX-BAR retromer mediates retrograde transport of cargo proteins from endosomes to the trans-Golgi network (TGN) and is involved in endosome-to-plasma membrane transport for cargo protein recycling. The SNX-BAR subcomplex functions to deform the donor membrane into a tubular profile called endosome-to-TGN transport carrier (ETC). Can sense membrane curvature and has in vitro vesicle-to-membrane remodeling activity. Involved in retrograde endosome-to-TGN transport of lysosomal enzyme receptors (IGF2R, M6PR and SORT1). Plays a role in targeting ligand-activated EGFR to the lysosomes for degradation after endocytosis from the cell surface and release from the Golgi. Involvement in retromer-independent endocytic trafficking of P2RY1 and lysosomal degradation of protease-activated receptor-1/F2R. Promotes KALRN- and RHOG-dependent but retromer-independent membrane remodeling such as lamellipodium formation; the function is dependent on GEF activity of KALRN. Required for endocytosis of DRD5 upon agonist stimulation but not for basal receptor trafficking. This is Sorting nexin-1 (SNX1) from Bos taurus (Bovine).